Consider the following 152-residue polypeptide: 3-hydroxyacyl-[acyl-carrier-protein] dehydratase FabZ (152 aa).

H57 is an active-site residue.

It belongs to the thioester dehydratase family. FabZ subfamily.

The protein resides in the cytoplasm. It catalyses the reaction a (3R)-hydroxyacyl-[ACP] = a (2E)-enoyl-[ACP] + H2O. Functionally, involved in unsaturated fatty acids biosynthesis. Catalyzes the dehydration of short chain beta-hydroxyacyl-ACPs and long chain saturated and unsaturated beta-hydroxyacyl-ACPs. This is 3-hydroxyacyl-[acyl-carrier-protein] dehydratase FabZ from Bradyrhizobium sp. (strain ORS 278).